We begin with the raw amino-acid sequence, 287 residues long: mRNA-capping enzyme regulatory subunit OPG124 (287 aa).

It belongs to the orthopoxvirus mRNA-capping enzyme regulatory subunit family. Interacts with the catalytic subunit OPG113.

The protein localises to the virion. Regulatory subunit of the mRNA cap enzyme which stabilizes the catalytic subunit and enhances its methyltransferase activity through an allosteric mechanism. Heterodimeric mRNA capping enzyme catalyzes the linkage of a N7-methyl-guanosine moiety to the first transcribed nucleotide (cap 0 structure), whereas the methyltransferase OPG102 is responsible for a second methylation at the 2'-O position of the ribose (cap 1 structure). Also involved in early viral gene transcription termination and intermediate viral gene transcription initiation. Early gene transcription termination requires the termination factor VTF, the DNA-dependent ATPase NPH-I/OPG123 and the RAP94/OPG109 subunit of the viral RNA polymerase, as well as the presence of a specific termination motif. Binds, together with RAP94/OPG109, to the termination motif 5'-UUUUUNU-3' in the nascent early mRNA. The sequence is that of mRNA-capping enzyme regulatory subunit OPG124 (OPG124) from Bos taurus (Bovine).